A 247-amino-acid polypeptide reads, in one-letter code: Adenosine 5'-phosphosulfate reductase (247 aa).

[4Fe-4S] cluster contacts are provided by Cys-133, Cys-134, Cys-216, and Cys-219. The disordered stretch occupies residues 222 to 247 (KPAPGSDPRSGRWAGQAKTECGLHAS). The active-site Nucleophile; cysteine thiosulfonate intermediate is the Cys-242.

The protein belongs to the PAPS reductase family. CysH subfamily. [4Fe-4S] cluster is required as a cofactor.

It is found in the cytoplasm. The catalysed reaction is [thioredoxin]-disulfide + sulfite + AMP + 2 H(+) = adenosine 5'-phosphosulfate + [thioredoxin]-dithiol. It participates in sulfur metabolism; hydrogen sulfide biosynthesis; sulfite from sulfate. Catalyzes the formation of sulfite from adenosine 5'-phosphosulfate (APS) using thioredoxin as an electron donor. The sequence is that of Adenosine 5'-phosphosulfate reductase from Rhodococcus opacus (strain B4).